The sequence spans 338 residues: Nicotinate-nucleotide--dimethylbenzimidazole phosphoribosyltransferase (338 aa).

Glu-305 serves as the catalytic Proton acceptor.

Belongs to the CobT family. As to quaternary structure, homodimer.

The enzyme catalyses 5,6-dimethylbenzimidazole + nicotinate beta-D-ribonucleotide = alpha-ribazole 5'-phosphate + nicotinate + H(+). Its pathway is nucleoside biosynthesis; alpha-ribazole biosynthesis; alpha-ribazole from 5,6-dimethylbenzimidazole: step 1/2. Catalyzes the synthesis of alpha-ribazole-5'-phosphate from nicotinate mononucleotide (NAMN) and 5,6-dimethylbenzimidazole (DMB). This chain is Nicotinate-nucleotide--dimethylbenzimidazole phosphoribosyltransferase (cobU), found in Sinorhizobium sp.